The chain runs to 420 residues: Protein disulfide isomerase CRELD1 (420 aa).

The first 29 residues, 1 to 29, serve as a signal peptide directing secretion; that stretch reads MAPRSSRGIAPAMLCGLSLFLGFPGLVWV. The Extracellular portion of the chain corresponds to 30–362; the sequence is QISVPPQSSP…GFFSEMTEDE (333 aa). Positions 46–49 match the CXXC motif; sequence CHTC. 4 disulfide bridges follow: C46-C49, C155-C169, C163-C181, and C183-C192. Residues 153–193 form the EGF-like 1 domain; the sequence is LPCPGGAERPCGGYGHCEGEGTRGGSGHCDCQAGYGGEACG. A glycan (N-linked (GlcNAc...) asparagine) is linked at N205. 2 FU repeats span residues 208 to 255 and 268 to 315; these read HLVC…ERAS and SYEC…AVCP. Residues 278–281 carry the CXXC motif; it reads CLGC. 4 cysteine pairs are disulfide-bonded: C278/C281, C309/C321, C314/C330, and C332/C343. The region spanning 305–344 is the EGF-like 2; calcium-binding domain; the sequence is DVDECETAVCPGENQQCENTEGSYRCICADGYKQMEGICV. The chain crosses the membrane as a helical span at residues 363–383; sequence LVVLQQMFFGVIICALATLAA. A topological domain (cytoplasmic) is located at residue K384. Residues 385–405 traverse the membrane as a helical segment; the sequence is GDLVFTAIFIGAVAAMTGYWL. Topologically, residues 406–420 are extracellular; that stretch reads SERSDRVLEGFIKGR.

The protein belongs to the CRELD family.

The protein localises to the membrane. It carries out the reaction Catalyzes the rearrangement of -S-S- bonds in proteins.. Protein disulfide isomerase. Promotes the localization of acetylcholine receptors (AChRs) to the plasma membrane. The polypeptide is Protein disulfide isomerase CRELD1 (CRELD1) (Bos taurus (Bovine)).